The following is a 247-amino-acid chain: Probable transcriptional regulatory protein PBPRA1113 (247 aa).

It belongs to the TACO1 family.

The protein resides in the cytoplasm. The chain is Probable transcriptional regulatory protein PBPRA1113 from Photobacterium profundum (strain SS9).